A 2271-amino-acid polypeptide reads, in one-letter code: Serine-rich adhesin for platelets (2271 aa).

An N-terminal signal peptide occupies residues 1–89; sequence MSKRQKAFHD…VNMLHDQQAF (89 aa). Residues 90–230 form a serine-rich repeat region 1, SRR1 region; it reads AASDAPLTSE…KTSTTSTSTA (141 aa). Polar residues predominate over residues 100–111; the sequence is LNTQSETVGNQN. Disordered regions lie at residues 100 to 229, 751 to 791, and 806 to 2243; these read LNTQ…STST, NSMS…VVST, and SVSA…GLLG. The segment covering 112–128 has biased composition (low complexity); sequence STTIEASTSTADSTSVT. Over residues 129–140 the composition is skewed to polar residues; the sequence is KNSSSVQTSNSD. Residues 150–229 show a composition bias toward low complexity; it reads VTSTTNSTSN…NKTSTTSTST (80 aa). Residues 231-751 form a non-repeat region (NRR) region; sequence PVKLRTFSRL…TTFKYEVTRN (521 aa). 3 stretches are compositionally biased toward low complexity: residues 752–791, 806–1392, and 1402–2214; these read SMSD…VVST, SVSA…LSLS, and SNSA…ATSE. Residues 752–2232 are serine-rich repeat region 2, SRR2; sequence SMSDSVSTSG…AQSEKRLPDT (1481 aa). Positions 2229–2233 match the LPXTG sorting signal motif; that stretch reads LPDTG. T2232 bears the Pentaglycyl murein peptidoglycan amidated threonine mark. A propeptide spans 2233–2271 (removed by sortase); sequence GDSIKQNGLLGGVMTLLVGLGLMKRKKKKDENDQDDSQA.

Belongs to the serine-rich repeat protein (SRRP) family. Proteolytically cleaved by a metalloprotease. In terms of processing, glycosylated. It is probable that most of the Ser residues in SSR1 and SSR2 are O-GlcNAcylated. Sequential glycosylation by sugar transferases are able to generate complex sugar polymorphisms.

It localises to the secreted. The protein localises to the cell wall. In terms of biological role, mediates binding to human platelets, possibly through a receptor-ligand interaction. Probably associated with virulence in endovascular infection. This Staphylococcus aureus (strain Mu50 / ATCC 700699) protein is Serine-rich adhesin for platelets (sraP).